Here is a 386-residue protein sequence, read N- to C-terminus: MKTAVHFGAGNIGRGFIGLLLYQSGYQTIFIDVNNQVIDEINKQKSYHVYLAGKEKQELTVNHITGINSIKEPDAVTEAIVKADVVTTAVGPTILPVIAKAISKGLQERTKQNNSPLNIIACENMVGGSSLLKEHVFESLEAHKIGEFDRLYGFPDAAVDRIVPNQTNKNLLDVMVEPYYEWVVEKKKIVGEVPPIFGITYVDDLAPYIERKLFTVNTGHAIPAYLGTHLGYDTIVEAMKDLRIDDTIYGALAESGEALIHAYGFNREMHQEYVSKIIQRFQNPYISDDVKRVARGPIRKLGAKDRLVKPALMYIEYTGKIPVYLAKTIAAALLFNNDEDREAIELQKKISATGYQQAFVEVSGCDSDSILTKKVIEQLRLLQNKK.

Ala4–Gly15 is an NAD(+) binding site.

This sequence belongs to the mannitol dehydrogenase family.

The catalysed reaction is D-mannitol 1-phosphate + NAD(+) = beta-D-fructose 6-phosphate + NADH + H(+). The polypeptide is Mannitol-1-phosphate 5-dehydrogenase (Oceanobacillus iheyensis (strain DSM 14371 / CIP 107618 / JCM 11309 / KCTC 3954 / HTE831)).